The following is a 244-amino-acid chain: Tyrosine recombinase XerD-like (244 aa).

Positions methionine 1 to tyrosine 73 constitute a Core-binding (CB) domain. A Tyr recombinase domain is found at alanine 90–arginine 244. Catalysis depends on residues lysine 150 and arginine 211. Catalysis depends on tyrosine 243, which acts as the O-(3'-phospho-DNA)-tyrosine intermediate.

The protein belongs to the 'phage' integrase family. XerD-like subfamily.

Its subcellular location is the cytoplasm. Functionally, putative tyrosine recombinase. Not involved in the cutting and rejoining of the recombining DNA molecules on dif(SL) site. The protein is Tyrosine recombinase XerD-like of Streptococcus pneumoniae (strain CGSP14).